The chain runs to 317 residues: tRNA dimethylallyltransferase (317 aa).

An ATP-binding site is contributed by 14 to 21 (GPTAVGKT). 16 to 21 (TAVGKT) serves as a coordination point for substrate. Residues 39–42 (DSMQ) are interaction with substrate tRNA.

Belongs to the IPP transferase family. In terms of assembly, monomer. Mg(2+) is required as a cofactor.

It carries out the reaction adenosine(37) in tRNA + dimethylallyl diphosphate = N(6)-dimethylallyladenosine(37) in tRNA + diphosphate. Catalyzes the transfer of a dimethylallyl group onto the adenine at position 37 in tRNAs that read codons beginning with uridine, leading to the formation of N6-(dimethylallyl)adenosine (i(6)A). This Bacillus cereus (strain Q1) protein is tRNA dimethylallyltransferase.